The primary structure comprises 337 residues: Ribosomal RNA small subunit methyltransferase H (337 aa).

S-adenosyl-L-methionine-binding positions include 45–47 (GGH), D64, H91, D112, and Q119.

The protein belongs to the methyltransferase superfamily. RsmH family.

The protein localises to the cytoplasm. It carries out the reaction cytidine(1402) in 16S rRNA + S-adenosyl-L-methionine = N(4)-methylcytidine(1402) in 16S rRNA + S-adenosyl-L-homocysteine + H(+). Its function is as follows. Specifically methylates the N4 position of cytidine in position 1402 (C1402) of 16S rRNA. This is Ribosomal RNA small subunit methyltransferase H from Cutibacterium acnes (strain DSM 16379 / KPA171202) (Propionibacterium acnes).